Reading from the N-terminus, the 388-residue chain is Chorismate synthase (388 aa).

Arginine 39 and arginine 45 together coordinate NADP(+). Residues arginine 130–serine 132, asparagine 251–alanine 252, glycine 296, lysine 311–threonine 315, and arginine 337 contribute to the FMN site.

It belongs to the chorismate synthase family. As to quaternary structure, homotetramer. It depends on FMNH2 as a cofactor.

The catalysed reaction is 5-O-(1-carboxyvinyl)-3-phosphoshikimate = chorismate + phosphate. It functions in the pathway metabolic intermediate biosynthesis; chorismate biosynthesis; chorismate from D-erythrose 4-phosphate and phosphoenolpyruvate: step 7/7. In terms of biological role, catalyzes the anti-1,4-elimination of the C-3 phosphate and the C-6 proR hydrogen from 5-enolpyruvylshikimate-3-phosphate (EPSP) to yield chorismate, which is the branch point compound that serves as the starting substrate for the three terminal pathways of aromatic amino acid biosynthesis. This reaction introduces a second double bond into the aromatic ring system. The polypeptide is Chorismate synthase (Streptococcus pyogenes serotype M28 (strain MGAS6180)).